A 120-amino-acid chain; its full sequence is NAD(P)H-quinone oxidoreductase subunit 3 (120 aa).

3 helical membrane passes run 2-22, 64-84, and 89-109; these read FVLSGYEYFLGFLIVSSLVPI, MFALVFVVFDVETVFLYPWAV, and LGLLAFVEALIFIAILVIALV.

This sequence belongs to the complex I subunit 3 family. NDH-1 can be composed of about 15 different subunits; different subcomplexes with different compositions have been identified which probably have different functions.

The protein localises to the cellular thylakoid membrane. The enzyme catalyses a plastoquinone + NADH + (n+1) H(+)(in) = a plastoquinol + NAD(+) + n H(+)(out). It catalyses the reaction a plastoquinone + NADPH + (n+1) H(+)(in) = a plastoquinol + NADP(+) + n H(+)(out). NDH-1 shuttles electrons from an unknown electron donor, via FMN and iron-sulfur (Fe-S) centers, to quinones in the respiratory and/or the photosynthetic chain. The immediate electron acceptor for the enzyme in this species is believed to be plastoquinone. Couples the redox reaction to proton translocation, and thus conserves the redox energy in a proton gradient. Cyanobacterial NDH-1 also plays a role in inorganic carbon-concentration. The protein is NAD(P)H-quinone oxidoreductase subunit 3 of Picosynechococcus sp. (strain ATCC 27264 / PCC 7002 / PR-6) (Agmenellum quadruplicatum).